Reading from the N-terminus, the 98-residue chain is Putative protein p20 (98 aa).

The disordered stretch occupies residues 77 to 98 (PNPPVEPSSKALSHASPPSVSS).

This Escherichia coli (Bacteriophage APSE-1) protein is Putative protein p20 (20).